The primary structure comprises 165 residues: Acireductone dioxygenase (165 aa).

Residues H90, H92, E96, and H134 each coordinate Fe(2+). Positions 90, 92, 96, and 134 each coordinate Ni(2+).

The protein belongs to the acireductone dioxygenase (ARD) family. In terms of assembly, monomer. The cofactor is Fe(2+). Ni(2+) serves as cofactor.

It catalyses the reaction 1,2-dihydroxy-5-(methylsulfanyl)pent-1-en-3-one + O2 = 3-(methylsulfanyl)propanoate + CO + formate + 2 H(+). The catalysed reaction is 1,2-dihydroxy-5-(methylsulfanyl)pent-1-en-3-one + O2 = 4-methylsulfanyl-2-oxobutanoate + formate + 2 H(+). It functions in the pathway amino-acid biosynthesis; L-methionine biosynthesis via salvage pathway; L-methionine from S-methyl-5-thio-alpha-D-ribose 1-phosphate: step 5/6. Its function is as follows. Catalyzes 2 different reactions between oxygen and the acireductone 1,2-dihydroxy-3-keto-5-methylthiopentene (DHK-MTPene) depending upon the metal bound in the active site. Fe-containing acireductone dioxygenase (Fe-ARD) produces formate and 2-keto-4-methylthiobutyrate (KMTB), the alpha-ketoacid precursor of methionine in the methionine recycle pathway. Ni-containing acireductone dioxygenase (Ni-ARD) produces methylthiopropionate, carbon monoxide and formate, and does not lie on the methionine recycle pathway. This Rhodopseudomonas palustris (strain ATCC BAA-98 / CGA009) protein is Acireductone dioxygenase.